The sequence spans 497 residues: Probable pectinesterase 30 (497 aa).

The signal sequence occupies residues 1–21; the sequence is MLVKVFSFFILMIIMVIGVSK. N-linked (GlcNAc...) asparagine glycans are attached at residues Asn-238 and Asn-254. Thr-263 lines the substrate pocket. Asp-316 (proton donor) is an active-site residue. Cys-330 and Cys-350 are disulfide-bonded. Asp-337 (nucleophile) is an active-site residue. An N-linked (GlcNAc...) asparagine glycan is attached at Asn-385. Substrate-binding residues include Arg-403 and Trp-405.

The protein belongs to the pectinesterase family. Expressed in siliques.

The protein localises to the secreted. The protein resides in the cell wall. It catalyses the reaction [(1-&gt;4)-alpha-D-galacturonosyl methyl ester](n) + n H2O = [(1-&gt;4)-alpha-D-galacturonosyl](n) + n methanol + n H(+). It functions in the pathway glycan metabolism; pectin degradation; 2-dehydro-3-deoxy-D-gluconate from pectin: step 1/5. Acts in the modification of cell walls via demethylesterification of cell wall pectin. This chain is Probable pectinesterase 30 (PME30), found in Arabidopsis thaliana (Mouse-ear cress).